We begin with the raw amino-acid sequence, 37 residues long: Large ribosomal subunit protein bL36 (37 aa).

This sequence belongs to the bacterial ribosomal protein bL36 family.

This is Large ribosomal subunit protein bL36 from Prochlorococcus marinus (strain MIT 9313).